The sequence spans 326 residues: GMP reductase (326 aa).

C175 serves as the catalytic Thioimidate intermediate. 204–227 is an NADP(+) binding site; sequence IIADGGIRTHGDIAKSVRFGATMV.

The protein belongs to the IMPDH/GMPR family. GuaC type 2 subfamily.

It carries out the reaction IMP + NH4(+) + NADP(+) = GMP + NADPH + 2 H(+). Its function is as follows. Catalyzes the irreversible NADPH-dependent deamination of GMP to IMP. It functions in the conversion of nucleobase, nucleoside and nucleotide derivatives of G to A nucleotides, and in maintaining the intracellular balance of A and G nucleotides. In Bacillus licheniformis (strain ATCC 14580 / DSM 13 / JCM 2505 / CCUG 7422 / NBRC 12200 / NCIMB 9375 / NCTC 10341 / NRRL NRS-1264 / Gibson 46), this protein is GMP reductase.